The following is a 336-amino-acid chain: Aspartate--ammonia ligase (336 aa).

This sequence belongs to the class-II aminoacyl-tRNA synthetase family. AsnA subfamily.

Its subcellular location is the cytoplasm. The enzyme catalyses L-aspartate + NH4(+) + ATP = L-asparagine + AMP + diphosphate + H(+). Its pathway is amino-acid biosynthesis; L-asparagine biosynthesis; L-asparagine from L-aspartate (ammonia route): step 1/1. This Ligilactobacillus salivarius (strain UCC118) (Lactobacillus salivarius) protein is Aspartate--ammonia ligase.